We begin with the raw amino-acid sequence, 239 residues long: Large ribosomal subunit protein uL1 (239 aa).

This sequence belongs to the universal ribosomal protein uL1 family. In terms of assembly, part of the 50S ribosomal subunit.

Binds directly to 23S rRNA. The L1 stalk is quite mobile in the ribosome, and is involved in E site tRNA release. Functionally, protein L1 is also a translational repressor protein, it controls the translation of the L11 operon by binding to its mRNA. This chain is Large ribosomal subunit protein uL1, found in Rickettsia rickettsii (strain Iowa).